The sequence spans 213 residues: Oxidase ustYa (213 aa).

The segment at 1–26 (MAERSSNGYKEVPVRQSEESTIAEEE) is disordered. A helical transmembrane segment spans residues 48–68 (AVWFLIALLLLSNIGLLGGLI). Asn-98 is a glycosylation site (N-linked (GlcNAc...) asparagine). 2 short sequence motifs (HXXHC) span residues 123–127 (HQLHC) and 150–154 (HLMHC).

Belongs to the ustYa family.

The protein localises to the membrane. Its pathway is mycotoxin biosynthesis. Functionally, oxidase; part of the gene cluster that mediates the biosynthesis of the secondary metabolite ustiloxin B, an antimitotic tetrapeptide. First, ustA is processed by the subtilisin-like endoprotease Kex2 that is outside the ustiloxin B gene cluster, at the C-terminal side of Arg-Lys, after transfer to Golgi apparatus through the endoplasmic reticulum (ER). Cleavage by KEX2 generates 16 peptides YAIG-I to YAIG-XVI. To process the precursor peptide further, at least two peptidases are necessary to cleave the N-terminal and C-terminal sides of the Tyr-Ala-Ile-Gly core peptide which serves as backbone for the synthesis of ustiloxin B, through cyclization and modification of the tyrosine with a non-protein coding amino acid, norvaline. One of the two peptidases must be the serine peptidase ustP; and the other pepdidase is probably ustH. Macrocyclization of the core peptide derived from ustA requires the tyrosinase ustQ, as well as the homologous oxidases ustYa and ustYb, and leads to the production of the first cyclization product N-desmethylustiloxin F. For the formation of N-desmethylustiloxin F, three oxidation steps are required, hydroxylation at the benzylic position, hydroxylation at either the aromatic ring of Tyr or beta-position of Ile, and oxidative cyclization. UstQ may catalyze the oxidation of a phenol moiety, whereas the ustYa and ustYb are most likely responsible for the remaining two-step oxidations. N-desmethylustiloxin F is then methylated by ustM to yield ustiloxin F which in turn substrate of the cytochrome P450 monooxygenase ustC which catalyzes the formation of S-deoxyustiloxin H. The flavoprotein monooxygenases ustF1 and ustF2 then participate in the modification of the side chain of S-deoxyustiloxin H, leading to the synthesis of an oxime intermediate, via ustiloxin H. Finally, carboxylative dehydration performed by the cysteine desulfurase-like protein ustD yields ustiloxin B. The sequence is that of Oxidase ustYa from Aspergillus flavus (strain ATCC 200026 / FGSC A1120 / IAM 13836 / NRRL 3357 / JCM 12722 / SRRC 167).